The following is a 320-amino-acid chain: Cytochrome f (320 aa).

An N-terminal signal peptide occupies residues 1-35; it reads MQNRNTFSWVKEQMTRFISVSIMIYVITRTSISNA. Residues Y36, C56, C59, and H60 each contribute to the heme site. Residues 286-306 form a helical membrane-spanning segment; it reads VQGLLFFLASVILAQIFLVLK.

It belongs to the cytochrome f family. In terms of assembly, the 4 large subunits of the cytochrome b6-f complex are cytochrome b6, subunit IV (17 kDa polypeptide, petD), cytochrome f and the Rieske protein, while the 4 small subunits are PetG, PetL, PetM and PetN. The complex functions as a dimer. Heme is required as a cofactor.

Its subcellular location is the plastid. It localises to the chloroplast thylakoid membrane. In terms of biological role, component of the cytochrome b6-f complex, which mediates electron transfer between photosystem II (PSII) and photosystem I (PSI), cyclic electron flow around PSI, and state transitions. The polypeptide is Cytochrome f (Drimys granadensis).